The following is a 368-amino-acid chain: Tetraacyldisaccharide 4'-kinase (368 aa).

66–73 (TVGGTGKT) provides a ligand contact to ATP.

This sequence belongs to the LpxK family.

The enzyme catalyses a lipid A disaccharide + ATP = a lipid IVA + ADP + H(+). It functions in the pathway glycolipid biosynthesis; lipid IV(A) biosynthesis; lipid IV(A) from (3R)-3-hydroxytetradecanoyl-[acyl-carrier-protein] and UDP-N-acetyl-alpha-D-glucosamine: step 6/6. Its function is as follows. Transfers the gamma-phosphate of ATP to the 4'-position of a tetraacyldisaccharide 1-phosphate intermediate (termed DS-1-P) to form tetraacyldisaccharide 1,4'-bis-phosphate (lipid IVA). The sequence is that of Tetraacyldisaccharide 4'-kinase from Desulfatibacillum aliphaticivorans.